Reading from the N-terminus, the 213-residue chain is MQASLTQALNGLRVSRETVQKLEHFASLFQKWARSINLVAPSTLEDLWRRHILDSLQLYQLSPGPKTWVDLGSGGGFPGVITAICLSEAEGGWVHLVESNNKKAAFLRVALRETGARGSVHPIRIEAAPAEIPSCDAISARALADLSQLLDYCAPWMLAEGSGTVAFFHKGRDYQQEVDKAVSRFQFDLIKHASVVEPDSVVLEIANLSRRTK.

S-adenosyl-L-methionine-binding positions include glycine 72, phenylalanine 77, 125-126 (IE), and arginine 141.

The protein belongs to the methyltransferase superfamily. RNA methyltransferase RsmG family.

The protein resides in the cytoplasm. It carries out the reaction guanosine(527) in 16S rRNA + S-adenosyl-L-methionine = N(7)-methylguanosine(527) in 16S rRNA + S-adenosyl-L-homocysteine. Its function is as follows. Specifically methylates the N7 position of guanine in position 527 of 16S rRNA. The protein is Ribosomal RNA small subunit methyltransferase G of Rhizobium meliloti (strain 1021) (Ensifer meliloti).